The chain runs to 104 residues: ATP synthase subunit c (104 aa).

2 helical membrane-spanning segments follow: residues 31–51 (SVVAAGIGLGLAALGGAIGMG) and 75–95 (MFIALAMIEAQVIYALVVAMI).

This sequence belongs to the ATPase C chain family. F-type ATPases have 2 components, F(1) - the catalytic core - and F(0) - the membrane proton channel. F(1) has five subunits: alpha(3), beta(3), gamma(1), delta(1), epsilon(1). F(0) has three main subunits: a(1), b(2) and c(10-14). The alpha and beta chains form an alternating ring which encloses part of the gamma chain. F(1) is attached to F(0) by a central stalk formed by the gamma and epsilon chains, while a peripheral stalk is formed by the delta and b chains.

Its subcellular location is the cell inner membrane. Its function is as follows. F(1)F(0) ATP synthase produces ATP from ADP in the presence of a proton or sodium gradient. F-type ATPases consist of two structural domains, F(1) containing the extramembraneous catalytic core and F(0) containing the membrane proton channel, linked together by a central stalk and a peripheral stalk. During catalysis, ATP synthesis in the catalytic domain of F(1) is coupled via a rotary mechanism of the central stalk subunits to proton translocation. Functionally, key component of the F(0) channel; it plays a direct role in translocation across the membrane. A homomeric c-ring of between 10-14 subunits forms the central stalk rotor element with the F(1) delta and epsilon subunits. This Aliarcobacter butzleri (strain RM4018) (Arcobacter butzleri) protein is ATP synthase subunit c.